Consider the following 415-residue polypeptide: Dynein assembly factor with WD repeat domains 1 (415 aa).

WD repeat units lie at residues 90–129 (AHIL…ELNT), 132–174 (GHRN…HTFR), 175–214 (GHTA…EVCT), 217–256 (GHSA…KVNI), 259–298 (GHCA…CVAT), 301–340 (GHDD…CIAK), 343–384 (GHEG…QVLE), and 386–415 (HTDE…RIWR).

It belongs to the WD repeat WDR69 family. Interacts with IFT46.

It is found in the cytoplasm. Its subcellular location is the cytoskeleton. The protein resides in the flagellum basal body. It localises to the flagellum axoneme. Its function is as follows. Required for axonemal dynein assembly and ciliary motility in ciliated organs, including Kupffer's vesicle, during embryogenesis. Facilitates the onset of robust cilia motility during development. The protein is Dynein assembly factor with WD repeat domains 1 (DAW1) of Macaca fascicularis (Crab-eating macaque).